The sequence spans 580 residues: Type 3 secretion system translocon protein SctE (580 aa).

Transmembrane regions (helical) follow at residues 313 to 333 (ILGA…GGAS) and 399 to 419 (IGSI…VVLV).

It belongs to the SctE/SipB/YopB family. The core secretion machinery of the T3SS is composed of approximately 20 different proteins, including cytoplasmic components, a base, an export apparatus and a needle. This subunit is involved in the formation of a pore, called the translocon, in host membrane.

The protein localises to the secreted. It is found in the host membrane. In terms of biological role, component of the type III secretion system (T3SS), also called injectisome, which is used to inject bacterial effector proteins into eukaryotic host cells. IpaB/SctE and IpaC/SctB are inserted into the host membrane where they form a pore and allow the translocation of effector proteins into the cytosol of target cells. The polypeptide is Type 3 secretion system translocon protein SctE (Shigella dysenteriae).